The primary structure comprises 358 residues: MTGSFSVKLKSKKGQFIVKDLNQNTTLGELKTRIAQATAIQELQLHVLVGYPPKPLDLSENRENQNLKTVGINSGETLIVEEKAGAAGPTSTPLASGSGSSTMEDDEALARRLQAEEDAEHLRQVSSGGSIETGALNIVQSLEPVISPEESGPNGNFNGILLKKVVPADNSCLFTSIRFVLNGKVDNEGSEMMRHIIAQEVSADTQQYNDAVLGKSNSDYCAWIQKADSWGGAIEVSILSNYYGIEIDVVDIQNAIINRFGEDKNFGLRVFLLFDGIHYDPLYMETQQNSVPATIFPVEEMGVYQQAEQIANEAKSSRQFTNVDKFTLRCMDCDVMLVGQGQAQEHAKKTGHENFEEI.

In terms of domain architecture, Ubiquitin-like spans 5-87; that stretch reads FSVKLKSKKG…LIVEEKAGAA (83 aa). A UBX-like region spans residues 8–94; that stretch reads KLKSKKGQFI…GAAGPTSTPL (87 aa). Residues 83–108 are disordered; the sequence is KAGAAGPTSTPLASGSGSSTMEDDEA. The segment covering 89–102 has biased composition (polar residues); that stretch reads PTSTPLASGSGSST. The region spanning 161 to 285 is the OTU domain; that stretch reads LLKKVVPADN…GIHYDPLYME (125 aa). The cys-loop stretch occupies residues 166–172; that stretch reads VPADNSC. Asp169 is a catalytic residue. Cys172 (nucleophile) is an active-site residue. Positions 224-234 are variable-loop; that stretch reads IQKADSWGGAI. The interval 274–278 is his-loop; sequence FDGIH. Ile277 is a binding site for substrate. His278 is an active-site residue. Residues 301–306 are S2 site; it reads MGVYQQ. Residues 328–352 form a C2H2-type zinc finger; sequence LRCMDCDVMLVGQGQAQEHAKKTGH. His352 is an active-site residue.

It carries out the reaction Thiol-dependent hydrolysis of ester, thioester, amide, peptide and isopeptide bonds formed by the C-terminal Gly of ubiquitin (a 76-residue protein attached to proteins as an intracellular targeting signal).. In terms of biological role, hydrolase that can remove conjugated ubiquitin from proteins and may therefore play an important regulatory role at the level of protein turnover by preventing degradation. The sequence is that of Ubiquitin thioesterase OTU1 from Drosophila pseudoobscura pseudoobscura (Fruit fly).